The sequence spans 727 residues: Procollagen-lysine,2-oxoglutarate 5-dioxygenase 1 (727 aa).

A signal peptide spans 1–18 (MRPLLLLALLGWLLLAEA). Asparagine 163, asparagine 197, and asparagine 538 each carry an N-linked (GlcNAc...) asparagine glycan. Residues 636-727 (QFDLAFVVRY…RYIAVSFVDP (92 aa)) form the Fe2OG dioxygenase domain. 2 residues coordinate Fe cation: histidine 656 and aspartate 658. The N-linked (GlcNAc...) asparagine glycan is linked to asparagine 686. Residue histidine 708 coordinates Fe cation. Arginine 718 is a catalytic residue.

In terms of assembly, homodimer. Identified in a complex with P3H3 and P3H4. Requires Fe(2+) as cofactor. L-ascorbate serves as cofactor.

The protein resides in the rough endoplasmic reticulum membrane. It catalyses the reaction L-lysyl-[collagen] + 2-oxoglutarate + O2 = (5R)-5-hydroxy-L-lysyl-[collagen] + succinate + CO2. Part of a complex composed of PLOD1, P3H3 and P3H4 that catalyzes hydroxylation of lysine residues in collagen alpha chains and is required for normal assembly and cross-linkling of collagen fibrils. Forms hydroxylysine residues in -Xaa-Lys-Gly- sequences in collagens. These hydroxylysines serve as sites of attachment for carbohydrate units and are essential for the stability of the intermolecular collagen cross-links. The protein is Procollagen-lysine,2-oxoglutarate 5-dioxygenase 1 (PLOD1) of Homo sapiens (Human).